The sequence spans 617 residues: Probable Xaa-Pro aminopeptidase P (617 aa).

Asp-414, Asp-425, Glu-523, and Glu-537 together coordinate Mn(2+).

It belongs to the peptidase M24B family. Mn(2+) is required as a cofactor.

The catalysed reaction is Release of any N-terminal amino acid, including proline, that is linked to proline, even from a dipeptide or tripeptide.. In terms of biological role, catalyzes the removal of a penultimate prolyl residue from the N-termini of peptides. The polypeptide is Probable Xaa-Pro aminopeptidase P (AMPP) (Ajellomyces capsulatus (strain G186AR / H82 / ATCC MYA-2454 / RMSCC 2432) (Darling's disease fungus)).